The sequence spans 100 residues: Large ribosomal subunit protein bL21 (100 aa).

Belongs to the bacterial ribosomal protein bL21 family. Part of the 50S ribosomal subunit. Contacts protein L20.

Its function is as follows. This protein binds to 23S rRNA in the presence of protein L20. The chain is Large ribosomal subunit protein bL21 from Mycoplasma capricolum subsp. capricolum (strain California kid / ATCC 27343 / NCTC 10154).